Here is a 650-residue protein sequence, read N- to C-terminus: p-hydroxybenzoic acid efflux pump subunit AaeB (650 aa).

11 helical membrane passes run Phe7–Leu27, Trp32–Pro52, Gly61–Ala81, Val87–Ile107, Leu115–Leu135, Glu148–Ile168, Leu365–Ile385, Phe402–Pro422, Gln426–Ile446, Gln450–Met470, and Ile478–Ile498.

The protein belongs to the aromatic acid exporter ArAE (TC 2.A.85) family.

Its subcellular location is the cell inner membrane. Forms an efflux pump with AaeA. Could function as a metabolic relief valve, allowing to eliminate certain compounds when they accumulate to high levels in the cell. This Pantoea ananatis (strain LMG 20103) protein is p-hydroxybenzoic acid efflux pump subunit AaeB.